We begin with the raw amino-acid sequence, 461 residues long: Argininosuccinate lyase (461 aa).

The protein belongs to the lyase 1 family. Argininosuccinate lyase subfamily.

It is found in the cytoplasm. The catalysed reaction is 2-(N(omega)-L-arginino)succinate = fumarate + L-arginine. Its pathway is amino-acid biosynthesis; L-arginine biosynthesis; L-arginine from L-ornithine and carbamoyl phosphate: step 3/3. The chain is Argininosuccinate lyase from Nitrosomonas eutropha (strain DSM 101675 / C91 / Nm57).